Consider the following 409-residue polypeptide: MRIPVDPSTSRRFTPPSTAFPCGGGGGGKMGENSGALSAQATAGPGGRTRPEVRSMVDVLADHAGELVRTDSPNFLCSVLPSHWRCNKTLPVAFKVVALGDVPDGTVVTVMAGNDENYSAELRNASAVMKNQVARFNDLRFVGRSGRGKSFTLTITVFTNPTQVATYHRAIKVTVDGPREPRRHRQKIEDQTKAFPDRFGDLRMRVTPSTPSPRGSLSTTSHFSSQAQTPIQGSSDLNPFSDPRQFDRSFPTLQSLTESRFPDPRMHYPGAMSAAFPYSATPSGTSLGSLSVAGMPASSRFHHTYLPPPYPGAPQSQSGPFQANPAPYHLFYGASSGSYQFSMAAAGGGERSPTRMLTSCPSGASVSAGNLMNPSLGQADGVEADGSHSNSPTALSTPGRMDEAVWRPY.

Disordered stretches follow at residues 1–51, 177–248, and 346–409; these read MRIP…RTRP, GPRE…QFDR, and AGGG…WRPY. Over residues 7–17 the composition is skewed to polar residues; that stretch reads PSTSRRFTPPS. Residues 55 to 183 form the Runt domain; that stretch reads SMVDVLADHA…TVDGPREPRR (129 aa). Residues 187-204 show a composition bias toward basic and acidic residues; it reads KIEDQTKAFPDRFGDLRM. Residue Lys-193 forms a Glycyl lysine isopeptide (Lys-Gly) (interchain with G-Cter in SUMO2) linkage. Polar residues predominate over residues 207–238; the sequence is TPSTPSPRGSLSTTSHFSSQAQTPIQGSSDLN. The residue at position 241 (Ser-241) is a Phosphoserine. 2 stretches are compositionally biased toward polar residues: residues 355-376 and 387-396; these read RMLTSCPSGASVSAGNLMNPSL and SHSNSPTALS. Residues 400–409 show a composition bias toward basic and acidic residues; that stretch reads RMDEAVWRPY.

In terms of assembly, heterodimer with CBFB. RUNX3 binds DNA as a monomer and through the Runt domain. DNA-binding is increased by heterodimerization. Interacts with TLE1 and SUV39H1. The tyrosine phosphorylated form (via runt domain) interacts with SRC (via protein kinase domain). Interacts with FYN and LCK. Interacts with FOXP3. Interacts with ZFHX3. Interacts with TBX21. In terms of processing, phosphorylated on tyrosine residues by SRC. Phosphorylated by LCK and FYN.

Its subcellular location is the nucleus. It is found in the cytoplasm. Forms the heterodimeric complex core-binding factor (CBF) with CBFB. RUNX members modulate the transcription of their target genes through recognizing the core consensus binding sequence 5'-TGTGGT-3', or very rarely, 5'-TGCGGT-3', within their regulatory regions via their runt domain, while CBFB is a non-DNA-binding regulatory subunit that allosterically enhances the sequence-specific DNA-binding capacity of RUNX. The heterodimers bind to the core site of a number of enhancers and promoters, including murine leukemia virus, polyomavirus enhancer, T-cell receptor enhancers, LCK, IL3 and GM-CSF promoters. May be involved in the control of cellular proliferation and/or differentiation. In association with ZFHX3, up-regulates CDKN1A promoter activity following TGF-beta stimulation. CBF complexes repress ZBTB7B transcription factor during cytotoxic (CD8+) T cell development. They bind to RUNX-binding sequence within the ZBTB7B locus acting as transcriptional silencer and allowing for cytotoxic T cell differentiation. CBF complexes binding to the transcriptional silencer is essential for recruitment of nuclear protein complexes that catalyze epigenetic modifications to establish epigenetic ZBTB7B silencing. Necessary for the development and survival of sensory neurons expressing parvalbumin. This chain is Runt-related transcription factor 3 (Runx3), found in Mus musculus (Mouse).